Consider the following 1081-residue polypeptide: Probable cellulose synthase A catalytic subunit 8 [UDP-forming] (1081 aa).

The Cytoplasmic segment spans residues 1-277; the sequence is MDGDADAVKS…PSSRINPYRM (277 aa). Positions 19, 22, 38, 41, 46, 49, 61, and 64 each coordinate Zn(2+). The RING-type; degenerate zinc finger occupies 19 to 65; that stretch reads CQICGDGVGTTAEGDVFAACDVCGFPVCRPCYEYERKDGTQACPQCK. Positions 72–148 are disordered; sequence KGSPAIRGEE…YDSGEIPRGY (77 aa). A compositionally biased stretch (acidic residues) spans 81-91; sequence EGEDTDADDVS. Positions 103-112 are enriched in basic and acidic residues; that stretch reads QKQKIADRMR. The chain crosses the membrane as a helical span at residues 278–298; that stretch reads VIVLRLVVLSIFLHYRITNPV. Residues 299–300 lie on the Extracellular side of the membrane; it reads RN. Residues 301–321 form a helical membrane-spanning segment; the sequence is AYPLWLLSVICEIWFALSWIL. The Cytoplasmic portion of the chain corresponds to 322 to 864; that stretch reads DQFPKWFPIN…INTTIYPLTS (543 aa). Residues Ser360, Lys366, Glu367, and Asp396 each contribute to the UDP-alpha-D-glucose site. Residue Asp396 is part of the active site. A coiled-coil region spans residues 450–477; sequence VKDRRAMKREYEEFKVRINGLVAKAQKV. A UDP-alpha-D-glucose-binding site is contributed by Lys537. 2 residues coordinate Mn(2+): Lys538 and Asp562. Residues 660 to 684 are disordered; sequence SLCGGRKKASKSKKKSSDKKKSNKH. The span at 664-682 shows a compositional bias: basic residues; that stretch reads GRKKASKSKKKSSDKKKSN. Asp781 is a catalytic residue. The chain crosses the membrane as a helical span at residues 865–885; the sequence is IPLLIYCVLPAICLLTGKFII. Residues 886 to 890 lie on the Extracellular side of the membrane; that stretch reads PEISN. A helical transmembrane segment spans residues 891-911; the sequence is FASIWFISLFISIFATGILEM. Over 912 to 926 the chain is Cytoplasmic; it reads RWSGVGIDEWWRNEQ. A helical transmembrane segment spans residues 927–947; sequence FWVIGGISAHLFAVFQGLLKV. At 948–977 the chain is on the extracellular side; that stretch reads LAGIDTNFTVTSKASDEDGDFAELYMFKWT. Asn954 carries an N-linked (GlcNAc...) asparagine glycan. Residues 978 to 998 traverse the membrane as a helical segment; that stretch reads TLLIPPTTILIINLVGVVAGI. Residues 999–1009 lie on the Cytoplasmic side of the membrane; that stretch reads SYAINSGYQSW. The chain crosses the membrane as a helical span at residues 1010 to 1030; the sequence is GPLFGKLFFAFWVIVHLYPFL. Residues 1031–1039 lie on the Extracellular side of the membrane; sequence KGLMGRQNR. The helical transmembrane segment at 1040–1060 threads the bilayer; that stretch reads TPTIVVVWAILLASIFSLLWV. Residues 1061–1081 lie on the Cytoplasmic side of the membrane; the sequence is RIDPFTTRVTGPDTQTCGINC.

It belongs to the glycosyltransferase 2 family. Plant cellulose synthase subfamily. Mn(2+) serves as cofactor. Zn(2+) is required as a cofactor.

It is found in the cell membrane. The catalysed reaction is [(1-&gt;4)-beta-D-glucosyl](n) + UDP-alpha-D-glucose = [(1-&gt;4)-beta-D-glucosyl](n+1) + UDP + H(+). Its pathway is glycan metabolism; plant cellulose biosynthesis. Its function is as follows. Probable catalytic subunit of cellulose synthase terminal complexes ('rosettes'), required for beta-1,4-glucan microfibril crystallization, a major mechanism of the cell wall formation. In Oryza sativa subsp. japonica (Rice), this protein is Probable cellulose synthase A catalytic subunit 8 [UDP-forming] (CESA8).